Consider the following 222-residue polypeptide: MAKRSWMAKGLSASRPMTGEMGHEPLLVAFDFDGTLTVKDSFNAFLKWRAGPRWSFGVLRLTPALIAYVFDRNRGKLKAAAVRQFLKGATVAQIENDARAFAEAFAPSLLRPDAVAVWRGWRAKGAKMVIVTASPDLIVAPFARGLGADLLIGTRLRCSDDGRILGGLDGNNCRAKEKVIRLREVFGPDVRLTAAYGDTSGDTEMLAIADEKGYRIFRGKPA.

The protein is Protein CicA (cicA) of Caulobacter vibrioides (strain ATCC 19089 / CIP 103742 / CB 15) (Caulobacter crescentus).